The chain runs to 210 residues: Two-component response regulator ORR7 (210 aa).

Residues 53–92 are disordered; that stretch reads VVPLHDNASAEDDDDDEEDDDEDDDDDDDEDDEEEAAPPY. Residues 61-88 show a composition bias toward acidic residues; it reads SAEDDDDDEEDDDEDDDDDDDEDDEEEA. Residues 92 to 205 form the Response regulatory domain; sequence YVMAVDDSSV…VRPADISRIT (114 aa). Position 142 is a 4-aspartylphosphate (D142).

It belongs to the ARR family. Type-A subfamily. In terms of processing, two-component system major event consists of a His-to-Asp phosphorelay between a sensor histidine kinase (HK) and a response regulator (RR). In plants, the His-to-Asp phosphorelay involves an additional intermediate named Histidine-containing phosphotransfer protein (HPt). This multistep phosphorelay consists of a His-Asp-His-Asp sequential transfer of a phosphate group between first a His and an Asp of the HK protein, followed by the transfer to a conserved His of the HPt protein and finally the transfer to an Asp in the receiver domain of the RR protein.

In terms of biological role, functions as a response regulator involved in His-to-Asp phosphorelay signal transduction system. Phosphorylation of the Asp residue in the receiver domain activates the ability of the protein to promote the transcription of target genes. Type-A response regulators seem to act as negative regulators of the cytokinin signaling. In Oryza sativa subsp. japonica (Rice), this protein is Two-component response regulator ORR7.